A 166-amino-acid chain; its full sequence is Phosphopantetheine adenylyltransferase (166 aa).

Ser-11 is a binding site for substrate. ATP is bound by residues 11-12 and His-19; that span reads SF. 3 residues coordinate substrate: Lys-43, Leu-75, and Arg-89. Residues 90-92, Glu-100, and 125-131 contribute to the ATP site; these read GLR and YGYLSSS.

Belongs to the bacterial CoaD family. Homohexamer. Requires Mg(2+) as cofactor.

The protein resides in the cytoplasm. The enzyme catalyses (R)-4'-phosphopantetheine + ATP + H(+) = 3'-dephospho-CoA + diphosphate. The protein operates within cofactor biosynthesis; coenzyme A biosynthesis; CoA from (R)-pantothenate: step 4/5. Functionally, reversibly transfers an adenylyl group from ATP to 4'-phosphopantetheine, yielding dephospho-CoA (dPCoA) and pyrophosphate. The polypeptide is Phosphopantetheine adenylyltransferase (Syntrophotalea carbinolica (strain DSM 2380 / NBRC 103641 / GraBd1) (Pelobacter carbinolicus)).